The primary structure comprises 336 residues: UDP-N-acetylglucosamine--N-acetylmuramyl-(pentapeptide) pyrophosphoryl-undecaprenol N-acetylglucosamine transferase (336 aa).

Positions 102, 144, 172, and 264 each coordinate UDP-N-acetyl-alpha-D-glucosamine.

This sequence belongs to the glycosyltransferase 28 family. MurG subfamily.

The protein resides in the cell membrane. The enzyme catalyses di-trans,octa-cis-undecaprenyl diphospho-N-acetyl-alpha-D-muramoyl-L-alanyl-D-glutamyl-meso-2,6-diaminopimeloyl-D-alanyl-D-alanine + UDP-N-acetyl-alpha-D-glucosamine = di-trans,octa-cis-undecaprenyl diphospho-[N-acetyl-alpha-D-glucosaminyl-(1-&gt;4)]-N-acetyl-alpha-D-muramoyl-L-alanyl-D-glutamyl-meso-2,6-diaminopimeloyl-D-alanyl-D-alanine + UDP + H(+). The protein operates within cell wall biogenesis; peptidoglycan biosynthesis. Functionally, cell wall formation. Catalyzes the transfer of a GlcNAc subunit on undecaprenyl-pyrophosphoryl-MurNAc-pentapeptide (lipid intermediate I) to form undecaprenyl-pyrophosphoryl-MurNAc-(pentapeptide)GlcNAc (lipid intermediate II). This chain is UDP-N-acetylglucosamine--N-acetylmuramyl-(pentapeptide) pyrophosphoryl-undecaprenol N-acetylglucosamine transferase, found in Rubrobacter xylanophilus (strain DSM 9941 / JCM 11954 / NBRC 16129 / PRD-1).